Here is a 432-residue protein sequence, read N- to C-terminus: Gamma-glutamyl phosphate reductase (432 aa).

It belongs to the gamma-glutamyl phosphate reductase family.

Its subcellular location is the cytoplasm. The catalysed reaction is L-glutamate 5-semialdehyde + phosphate + NADP(+) = L-glutamyl 5-phosphate + NADPH + H(+). It functions in the pathway amino-acid biosynthesis; L-proline biosynthesis; L-glutamate 5-semialdehyde from L-glutamate: step 2/2. Functionally, catalyzes the NADPH-dependent reduction of L-glutamate 5-phosphate into L-glutamate 5-semialdehyde and phosphate. The product spontaneously undergoes cyclization to form 1-pyrroline-5-carboxylate. In Methylorubrum populi (strain ATCC BAA-705 / NCIMB 13946 / BJ001) (Methylobacterium populi), this protein is Gamma-glutamyl phosphate reductase.